We begin with the raw amino-acid sequence, 61 residues long: uncharacterized protein (61 aa).

The helical transmembrane segment at 10 to 27 threads the bilayer; the sequence is RILFFFFIFFTLFLFNIP.

It is found in the membrane. This is an uncharacterized protein from Dictyostelium discoideum (Social amoeba).